The primary structure comprises 944 residues: Respiratory burst oxidase homolog protein F (944 aa).

Topologically, residues 2 to 387 (KPFSKNDRRR…VYIMQENWKR (386 aa)) are cytoplasmic. Coiled-coil stretches lie at residues 102–126 (QFSQ…KRFS) and 157–184 (LEAR…RGLR). EF-hand-like regions lie at residues 207-215 (EKNGYIYRS) and 241-252 (RRLKVEKINHDE). 2 consecutive EF-hand domains span residues 264-299 (SFDS…SASA) and 308-343 (QAEE…KDTY). Ca(2+)-binding residues include D277, N279, D281, R283, E288, D321, and Y327. A phosphoserine mark is found at S354 and S358. The chain crosses the membrane as a helical span at residues 388–408 (IWVLSLWIMIMIGLFLWKFFQ). Over 409 to 475 (YKQKDAFHVM…INFHKTIAGA (67 aa)) the chain is Extracellular. One can recognise a Ferric oxidoreductase domain in the interval 426–583 (KGAAETLKFN…LFVIVYILLI (158 aa)). A helical transmembrane segment spans residues 476 to 492 (IVVAVILHIGDHLACDF). The Cytoplasmic segment spans residues 493 to 527 (PRIVRATEYDYNRYLFHYFQTKQPTYFDLVKGPEG). The helical transmembrane segment at 528–548 (ITGILMVILMIISFTLATRWF) threads the bilayer. The Extracellular portion of the chain corresponds to 549 to 570 (RRNLVKLPKPFDRLTGFNAFWY). A helical transmembrane segment spans residues 571–591 (SHHLFVIVYILLILHGIFLYF). Topologically, residues 592–599 (AKPWYVRT) are cytoplasmic. Residues 600–617 (TWMYLAVPVLLYGGERTL) form a helical membrane-spanning segment. Topologically, residues 618–744 (RYFRSGSYSV…PYGAPAQDYR (127 aa)) are extracellular. The 121-residue stretch at 622–742 (SGSYSVRLLK…DGPYGAPAQD (121 aa)) folds into the FAD-binding FR-type domain. Residues 745-765 (KYDVLLLVGLGIGATPFISIL) traverse the membrane as a helical segment. Topologically, residues 766–944 (KDLLNNIVKM…TKFEFHKEHF (179 aa)) are cytoplasmic.

This sequence belongs to the RBOH (TC 5.B.1.3) family. Monomer and homodimer. Interacts (via N-terminus) with CIPK26. Interacts (via N-terminus) with SRC2. Post-translationally, not glycosylated. Phosphorylated by CIPK26. As to expression, expressed in roots, stems, seedlings, inflorescences, leaves and guard cells.

It localises to the cell membrane. Inhibited by diphenylene iodonium (DPI). Calcium-dependent NADPH oxidase that generates superoxide. Generates reactive oxygen species (ROS) during incompatible interactions with pathogens and is important in the regulation of the hypersensitive response (HR). Involved in abscisic acid-induced stomatal closing and in UV-B and abscisic acid ROS-dependent signaling. The polypeptide is Respiratory burst oxidase homolog protein F (RBOHF) (Arabidopsis thaliana (Mouse-ear cress)).